The chain runs to 271 residues: MAGPQQQPPYLHLAELTASQFLEIWKHFDADGNGYIEGKELENFFQELEKARKGSGMMSKSDNFGEKMKEFMQKYDKNSDGKIEMAELAQILPTEENFLLCFRQHVGSSAEFMEAWRKYDTDRSGYIEANELKGFLSDLLKKANRPYDEPKLQEYTQTILRMFDLNGDGKLGLSEMSRLLPVQENFLLKFQGMKLTSEEFNAIFTFYDKDRSGYIDEHELDALLKDLYEKNKKEMNIQQLTNYRKSVMSLAEAGKLYRKDLEIVLCSEPPM.

EF-hand domains lie at 16-51 (LTAS…LEKA), 63-98 (NFGE…EENF), 107-142 (GSSA…LLKK), 151-186 (KLQE…QENF), 195-230 (LTSE…LYEK), and 235-270 (MNIQ…SEPP). Positions 29, 31, 33, 35, 40, 76, 78, 80, 82, 87, 120, 122, 124, 126, 131, 164, 166, 168, 170, 175, 208, 210, 212, 214, and 219 each coordinate Ca(2+). Phosphotyrosine is present on Tyr-214.

The protein belongs to the calbindin family. In terms of tissue distribution, brain.

It localises to the synapse. The protein resides in the cell projection. The protein localises to the dendrite. In terms of biological role, calcium-binding protein involved in calcium homeostasis and signal transduction. It plays a critical role in buffering intracellular calcium levels and modulating calcium-dependent signaling pathways. Predominantly expressed in specific neuronal populations, influences synaptic plasticity and neuronal excitability, contributing to learning and memory. During embryonic development, it facilitates neuronal differentiation and maturation. The polypeptide is Calretinin (Homo sapiens (Human)).